The following is a 575-amino-acid chain: NEDD4-binding protein 2-like 2 (575 aa).

Basic and acidic residues-rich tracts occupy residues 69-87, 129-142, and 149-167; these read QEDKTSTDVLKPLHKEMPG, PPEKKKCRERKSET, and DSKRRQEEKQKSNSKKLEM. Disordered stretches follow at residues 69–169 and 555–575; these read QEDK…EMDT and GEQRWGGSLGSHSQVSIADDY. A coiled-coil region spans residues 162–194; the sequence is SKKLEMDTELSQFYKEIEELENENEASQGSCTE. The span at 564–575 shows a compositional bias: polar residues; it reads GSHSQVSIADDY.

In Mus musculus (Mouse), this protein is NEDD4-binding protein 2-like 2 (N4bp2l2).